The following is a 469-amino-acid chain: 3-isopropylmalate dehydratase large subunit (469 aa).

Residues Cys347, Cys407, and Cys410 each coordinate [4Fe-4S] cluster.

It belongs to the aconitase/IPM isomerase family. LeuC type 1 subfamily. In terms of assembly, heterodimer of LeuC and LeuD. Requires [4Fe-4S] cluster as cofactor.

The catalysed reaction is (2R,3S)-3-isopropylmalate = (2S)-2-isopropylmalate. The protein operates within amino-acid biosynthesis; L-leucine biosynthesis; L-leucine from 3-methyl-2-oxobutanoate: step 2/4. Functionally, catalyzes the isomerization between 2-isopropylmalate and 3-isopropylmalate, via the formation of 2-isopropylmaleate. The chain is 3-isopropylmalate dehydratase large subunit from Prochlorococcus marinus subsp. pastoris (strain CCMP1986 / NIES-2087 / MED4).